The following is a 347-amino-acid chain: NADH-quinone oxidoreductase subunit H (347 aa).

Helical transmembrane passes span 13 to 33 (LIMI…IAYI), 82 to 102 (AVFL…WAVV), 115 to 135 (VGIL…IMGG), 161 to 181 (IGLV…TDIV), 198 to 218 (FLDW…ISAL), 258 to 278 (AVVL…LPPV), 286 to 306 (VPGI…FAMV), and 321 to 341 (LGWK…AFVL).

Belongs to the complex I subunit 1 family. NDH-1 is composed of 14 different subunits. Subunits NuoA, H, J, K, L, M, N constitute the membrane sector of the complex.

It localises to the cell inner membrane. It carries out the reaction a quinone + NADH + 5 H(+)(in) = a quinol + NAD(+) + 4 H(+)(out). Its function is as follows. NDH-1 shuttles electrons from NADH, via FMN and iron-sulfur (Fe-S) centers, to quinones in the respiratory chain. The immediate electron acceptor for the enzyme in this species is believed to be ubiquinone. Couples the redox reaction to proton translocation (for every two electrons transferred, four hydrogen ions are translocated across the cytoplasmic membrane), and thus conserves the redox energy in a proton gradient. This subunit may bind ubiquinone. The polypeptide is NADH-quinone oxidoreductase subunit H (Rhizobium rhizogenes (strain K84 / ATCC BAA-868) (Agrobacterium radiobacter)).